Consider the following 296-residue polypeptide: ATP synthase peripheral stalk subunit OSCP, mitochondrial (296 aa).

It belongs to the ATPase delta chain family. As to quaternary structure, component of the ATP synthase complex composed at least of ATP5F1A/subunit alpha, ATP5F1B/subunit beta, ATP5MC1/subunit c (homooctomer), MT-ATP6/subunit a, MT-ATP8/subunit 8, ATP5ME/subunit e, ATP5MF/subunit f, ATP5MG/subunit g, ATP5MK/subunit k, ATP5MJ/subunit j, ATP5F1C/subunit gamma, ATP5F1D/subunit delta, ATP5F1E/subunit epsilon, ATP5PF/subunit F6, ATP5PB/subunit b, ATP5PD/subunit d, ATP5PO/subunit OSCP. ATP synthase complex consists of a soluble F(1) head domain (subunits alpha(3) and beta(3)) - the catalytic core - and a membrane F(0) domain - the membrane proton channel (subunits c, a, 8, e, f, g, k and j). These two domains are linked by a central stalk (subunits gamma, delta, and epsilon) rotating inside the F1 region and a stationary peripheral stalk (subunits F6, b, d, and OSCP).

It is found in the mitochondrion. The protein localises to the mitochondrion inner membrane. Functionally, subunit OSCP, of the mitochondrial membrane ATP synthase complex (F(1)F(0) ATP synthase or Complex V) that produces ATP from ADP in the presence of a proton gradient across the membrane which is generated by electron transport complexes of the respiratory chain. ATP synthase complex consist of a soluble F(1) head domain - the catalytic core - and a membrane F(1) domain - the membrane proton channel. These two domains are linked by a central stalk rotating inside the F(1) region and a stationary peripheral stalk. During catalysis, ATP synthesis in the catalytic domain of F(1) is coupled via a rotary mechanism of the central stalk subunits to proton translocation. In vivo, can only synthesize ATP although its ATP hydrolase activity can be activated artificially in vitro. Part of the complex F(0) domain. Part of the complex F(0) domain and the peripheric stalk, which acts as a stator to hold the catalytic alpha(3)beta(3) subcomplex and subunit a/ATP6 static relative to the rotary elements. The sequence is that of ATP synthase peripheral stalk subunit OSCP, mitochondrial from Dictyostelium discoideum (Social amoeba).